Reading from the N-terminus, the 225-residue chain is UPF0758 protein Vapar_4033 (225 aa).

The 123-residue stretch at 103-225 (VFDSPGTVKQ…SYSMAEKGLL (123 aa)) folds into the MPN domain. Zn(2+) contacts are provided by His174, His176, and Asp187. A JAMM motif motif is present at residues 174 to 187 (HNHPSGSIEPSRAD).

It belongs to the UPF0758 family.

The polypeptide is UPF0758 protein Vapar_4033 (Variovorax paradoxus (strain S110)).